The sequence spans 496 residues: Beta-amylase (496 aa).

Asp54, His94, and Asp102 together coordinate substrate. Glu187 (proton donor) is an active-site residue. The substrate site is built by Lys296, His301, and Thr343. Glu381 serves as the catalytic Proton acceptor. Substrate is bound by residues 382–383 and Arg421; that span reads NA. Residues 455–496 form a disordered region; sequence YNHGIPPLKRSGPKIPDDVLNEATKPIPPFPWDSETDMKVDG.

Belongs to the glycosyl hydrolase 14 family.

The catalysed reaction is Hydrolysis of (1-&gt;4)-alpha-D-glucosidic linkages in polysaccharides so as to remove successive maltose units from the non-reducing ends of the chains.. The sequence is that of Beta-amylase (BMY1) from Medicago sativa (Alfalfa).